A 600-amino-acid polypeptide reads, in one-letter code: DNA ligase (600 aa).

Asp259 contacts ATP. Lys261 (N6-AMP-lysine intermediate) is an active-site residue. The ATP site is built by Arg266, Arg281, Glu311, Phe351, Arg428, and Lys434.

This sequence belongs to the ATP-dependent DNA ligase family. The cofactor is Mg(2+).

The enzyme catalyses ATP + (deoxyribonucleotide)n-3'-hydroxyl + 5'-phospho-(deoxyribonucleotide)m = (deoxyribonucleotide)n+m + AMP + diphosphate.. DNA ligase that seals nicks in double-stranded DNA during DNA replication, DNA recombination and DNA repair. This Acidianus ambivalens (Desulfurolobus ambivalens) protein is DNA ligase.